A 422-amino-acid chain; its full sequence is Monoacylglycerol lipase ABHD2 (422 aa).

Residues 1–15 (MSAQLEADVRTMSPE) are Cytoplasmic-facing. Residues 16 to 36 (MPAMFDGMKLAAVAAVLYVIV) traverse the membrane as a helical; Signal-anchor for type II membrane protein segment. The Extracellular portion of the chain corresponds to 37-422 (RSLNLKCPTA…HKPQCHQQKE (386 aa)). Residues 134 to 385 (MVICPGIGNH…HGGHLGFFEG (252 aa)) form the AB hydrolase-1 domain. Asn-142 is a glycosylation site (N-linked (GlcNAc...) asparagine). Ser-213 serves as the catalytic Nucleophile. Residues Asn-285, Asn-335, and Asn-344 are each glycosylated (N-linked (GlcNAc...) asparagine). Active-site charge relay system residues include Asp-348 and His-379.

This sequence belongs to the AB hydrolase superfamily. AB hydrolase 4 family.

The protein localises to the cell membrane. The catalysed reaction is Hydrolyzes glycerol monoesters of long-chain fatty acids.. The enzyme catalyses an acetyl ester + H2O = an aliphatic alcohol + acetate + H(+). It catalyses the reaction a triacylglycerol + H2O = a diacylglycerol + a fatty acid + H(+). It carries out the reaction 2-(5Z,8Z,11Z,14Z-eicosatetraenoyl)-glycerol + H2O = glycerol + (5Z,8Z,11Z,14Z)-eicosatetraenoate + H(+). The catalysed reaction is a butanoate ester + H2O = an aliphatic alcohol + butanoate + H(+). The enzyme catalyses hexadecanoate ester + H2O = an aliphatic alcohol + hexadecanoate + H(+). With respect to regulation, acylglycerol lipase activity is activated upon binding to progesterone. Functionally, progesterone-dependent acylglycerol lipase that catalyzes hydrolysis of endocannabinoid arachidonoylglycerol (AG) from cell membrane. Acts as a progesterone receptor: progesterone-binding activates the acylglycerol lipase activity, mediating degradation of 1-arachidonoylglycerol (1AG) and 2-arachidonoylglycerol (2AG) to glycerol and arachidonic acid (AA). Also displays an ester hydrolase activity against acetyl ester, butanoate ester and hexadecanoate ester. Plays a key role in sperm capacitation in response to progesterone by mediating degradation of 2AG, an inhibitor of the sperm calcium channel CatSper, leading to calcium influx via CatSper and sperm activation. May also play a role in smooth muscle cells migration. The sequence is that of Monoacylglycerol lipase ABHD2 (abhd2b) from Danio rerio (Zebrafish).